Consider the following 148-residue polypeptide: Cathelicidin-1 (148 aa).

The first 17 residues, 1–17 (MLSCWVLLLALLGGACA), serve as a signal peptide directing secretion. The propeptide occupies 18–122 (LPAPLGYSQA…TCVDSMADPV (105 aa)). Disulfide bonds link Cys-75-Cys-86 and Cys-97-Cys-114.

The protein belongs to the cathelicidin family. In terms of tissue distribution, detected in gizzard, liver, small intestine, large intestine, cloaca, bursa of Fabricius, gall bladder, lung, trachea, kidney, testis and bone marrow.

Its subcellular location is the secreted. In terms of biological role, binds bacterial lipopolysaccharide (LPS). Has potent antimicrobial activity against Gram-positive and Gram-negative bacteria (in vitro). Has hemolytic activity (in vitro). May play a role in the innate immune response. This is Cathelicidin-1 (CATHL1) from Gallus gallus (Chicken).